A 400-amino-acid chain; its full sequence is Hyaluronan and proteoglycan link protein 4 (400 aa).

The signal sequence occupies residues 1–30 (MACAPGALGHRALWAVAWGLLLLVPVLAGA). Positions 47–155 (SVVVQTAPGQ…VTNELEDDVG (109 aa)) constitute an Ig-like C2-type domain. Disulfide bonds link Cys69–Cys144, Cys186–Cys264, Cys210–Cys231, Cys291–Cys361, and Cys316–Cys337. Asn133 is a glycosylation site (N-linked (GlcNAc...) asparagine). 2 Link domains span residues 164 to 266 (VVFP…FCFT) and 271 to 363 (GRVF…YCYR).

Belongs to the HAPLN family. Expressed predominantly in brain where it is found mainly throughout the midbrain and hindbrain in a perineuronal net pattern.

Its subcellular location is the secreted. The protein localises to the extracellular space. It is found in the extracellular matrix. In terms of biological role, essential for the proper localization of brevican (BCAN), mainly as a perineuronal nets (PNNs)-type deposition in the brainstem and cerebellum thereby playing a key role in the formation and structural organization of PNNs. Contributes to the formation and transmission of inhibitory GABAergic synapses between Purkinje cells and deep cerebellar nuclei neurons. The sequence is that of Hyaluronan and proteoglycan link protein 4 (Hapln4) from Mus musculus (Mouse).